A 62-amino-acid chain; its full sequence is Short neurotoxin A (62 aa).

The segment covering 1-16 has biased composition (polar residues); that stretch reads RRCFNHPSSQPQTNKS. The disordered stretch occupies residues 1-21; that stretch reads RRCFNHPSSQPQTNKSCPPGE. 4 disulfides stabilise this stretch: cysteine 3–cysteine 24, cysteine 17–cysteine 41, cysteine 43–cysteine 54, and cysteine 55–cysteine 60.

This sequence belongs to the three-finger toxin family. Short-chain subfamily. Type I alpha-neurotoxin sub-subfamily. Expressed by the venom gland.

The protein resides in the secreted. Functionally, binds to muscle nicotinic acetylcholine receptor (nAChR) and inhibit acetylcholine from binding to the receptor, thereby impairing neuromuscular transmission. The chain is Short neurotoxin A from Laticauda crockeri (Crocker's sea snake).